A 1130-amino-acid polypeptide reads, in one-letter code: Putative beta-hexosaminidase (1130 aa).

The N-terminal stretch at 1–23 is a signal peptide; the sequence is MKWVKSGVGILGILLIICHAVTS. Composition is skewed to low complexity over residues 1001–1030 and 1037–1072; these read PGQMRALGQQAGQALRGQGQQTGQQTLPAQ and LTGQAAGTGVAGQSGQQPSAAGQGTQQGLPGQQRTG. Disordered regions lie at residues 1001 to 1075 and 1102 to 1130; these read PGQM…GVVP and QMRGQGQIPQTQGAVAGAGQSRVPQQQAG.

The protein belongs to the glycosyl hydrolase 20 family. In terms of tissue distribution, prismatic layer of shell (at protein level). Expressed primarily in the mantle with highest level in the mantle edge and lower level in the mantle pallium.

Its subcellular location is the secreted. The enzyme catalyses Hydrolysis of terminal non-reducing N-acetyl-D-hexosamine residues in N-acetyl-beta-D-hexosaminides.. Its pathway is glycan degradation; chitin degradation. In Pinctada maxima (Silver-lipped pearl oyster), this protein is Putative beta-hexosaminidase.